Consider the following 248-residue polypeptide: MSEAAQTLDGWYCLHDFRSIDWSAWKTLTSDEREAAIREFLSLVEKWQETEDKQEGSHAIYTIVGQKADIMFMILRPTIEELNEIETALNKTKLAEFLVPAYSYVSVVELSNYLASGDEDPYQIPEVRRRLYPILPKTKHVCFYPMDKRRQGNDNWYMLSMEERRNLMRAHGLTGRKYAGKVTQIITGSVGLDDFEWGVTLFSDDALQFKKLVYEMRFDEVSARYGEFGSFFVGNRLTVEKVPVFLHV.

Fe-coproporphyrin III is bound by residues R130, 144–148, H171, Q184, and S222; that span reads YPMDK. Residue Y144 is part of the active site.

This sequence belongs to the ChdC family. Type 1 subfamily. It depends on Fe-coproporphyrin III as a cofactor.

It catalyses the reaction Fe-coproporphyrin III + 2 H2O2 + 2 H(+) = heme b + 2 CO2 + 4 H2O. It carries out the reaction Fe-coproporphyrin III + H2O2 + H(+) = harderoheme III + CO2 + 2 H2O. The enzyme catalyses harderoheme III + H2O2 + H(+) = heme b + CO2 + 2 H2O. It functions in the pathway porphyrin-containing compound metabolism; protoheme biosynthesis. Its function is as follows. Involved in coproporphyrin-dependent heme b biosynthesis. Catalyzes the decarboxylation of Fe-coproporphyrin III (coproheme) to heme b (protoheme IX), the last step of the pathway. The reaction occurs in a stepwise manner with a three-propionate intermediate. The chain is Coproheme decarboxylase from Geobacillus sp. (strain WCH70).